The following is a 104-amino-acid chain: NADH-quinone oxidoreductase subunit K (104 aa).

A run of 3 helical transmembrane segments spans residues V4–A24, V31–F51, and L67–L87.

It belongs to the complex I subunit 4L family. As to quaternary structure, NDH-1 is composed of 14 different subunits. Subunits NuoA, H, J, K, L, M, N constitute the membrane sector of the complex.

The protein resides in the cell membrane. The catalysed reaction is a quinone + NADH + 5 H(+)(in) = a quinol + NAD(+) + 4 H(+)(out). Its function is as follows. NDH-1 shuttles electrons from NADH, via FMN and iron-sulfur (Fe-S) centers, to quinones in the respiratory chain. The immediate electron acceptor for the enzyme in this species is believed to be a menaquinone. Couples the redox reaction to proton translocation (for every two electrons transferred, four hydrogen ions are translocated across the cytoplasmic membrane), and thus conserves the redox energy in a proton gradient. The protein is NADH-quinone oxidoreductase subunit K of Bacillus cereus (strain Q1).